The chain runs to 132 residues: Pro-MCH 1 (132 aa).

The signal sequence occupies residues 1–24 (MRHYVLSISFAVALFLECYTPSTA). Cysteine 120 and cysteine 129 are joined by a disulfide.

The protein belongs to the melanin-concentrating hormone family. As to expression, pituitary gland. Produced in neurons of lateral basal hypothalamus which project both to the brain and to the neural lobe of the pituitary gland from where MCH is released.

Its function is as follows. Plays a role in skin pigmentation by antagonizing the action of melanotropin alpha. Induces melanin concentration within the melanophores. May participate in the control of the hypothalamo-pituitary adrenal gland axis by inhibiting the release of ACTH. This is Pro-MCH 1 (mch1) from Oncorhynchus keta (Chum salmon).